The primary structure comprises 349 residues: Protein RecA (349 aa).

Gly-65–Thr-72 provides a ligand contact to ATP. The tract at residues Lys-329–Ser-349 is disordered. The span at Glu-339–Ser-349 shows a compositional bias: acidic residues.

It belongs to the RecA family.

The protein localises to the cytoplasm. Can catalyze the hydrolysis of ATP in the presence of single-stranded DNA, the ATP-dependent uptake of single-stranded DNA by duplex DNA, and the ATP-dependent hybridization of homologous single-stranded DNAs. It interacts with LexA causing its activation and leading to its autocatalytic cleavage. This chain is Protein RecA, found in Acinetobacter baylyi (strain ATCC 33305 / BD413 / ADP1).